Consider the following 458-residue polypeptide: MAALSKSIPHNCYEIGHTWQPSCWLSFLHITRGALEESLKIYAPLYLIAAILRKRKLDYYLHKLLPEILQSASFLTANGALFMAFFCILRKILGKFYLWSPGFGAALPASYVAILVERKSRRGLLTIYMANLATETLFRMGVARGVITTLRNGEVLLFCITAAMYMFFFRCKDGLKGFTFSALRFIVGKEEIPTHSYSPEAAYAKVEQKTEKHEEKPRGMNIIALVRKLVDSVCKHGPRHRCCKHYEDNCISYCIKGFIRMFSVGYLIQCCLRIPSAFRHLFTQPSRLLSLFYNKENFQLGAFLGSFVSIYKGTSCFLRWVRNLDDELHAIIAGFLAGVSMMFYKSTTISMYLASKLVETMYFKGIEAGKVPYFPHADTIIYSISTAICFQAAVMEVQTLRPSYWKFLLRLTKGRFAVMNRKVLDVFGTGASKNFPDFTPRLDPRYTTVTPELPIEFS.

6 helical membrane passes run 68–88, 96–116, 149–169, 298–318, 331–351, and 380–400; these read ILQSASFLTANGALFMAFFCI, FYLWSPGFGAALPASYVAILV, TLRNGEVLLFCITAAMYMFFF, FQLGAFLGSFVSIYKGTSCFL, IIAGFLAGVSMMFYKSTTISM, and IIYSISTAICFQAAVMEVQTL.

The protein belongs to the TMEM135 family.

The protein localises to the mitochondrion membrane. The protein resides in the peroxisome membrane. In terms of biological role, involved in mitochondrial metabolism by regulating the balance between mitochondrial fusion and fission. May act as a regulator of mitochondrial fission that promotes DNM1L-dependent fission through activation of DNM1L. May be involved in peroxisome organization. This Bos taurus (Bovine) protein is Transmembrane protein 135.